We begin with the raw amino-acid sequence, 410 residues long: Arginine deiminase (410 aa).

Cysteine 399 serves as the catalytic Amidino-cysteine intermediate.

Belongs to the arginine deiminase family.

It is found in the cytoplasm. It carries out the reaction L-arginine + H2O = L-citrulline + NH4(+). It functions in the pathway amino-acid degradation; L-arginine degradation via ADI pathway; carbamoyl phosphate from L-arginine: step 1/2. This Listeria monocytogenes serotype 4b (strain F2365) protein is Arginine deiminase.